We begin with the raw amino-acid sequence, 126 residues long: Histone H2B (126 aa).

Residues 1-12 are compositionally biased toward low complexity; sequence MPEPAKSAPAPK. Positions 1–36 are disordered; sequence MPEPAKSAPAPKKGSKKAVTKTQKKGDKKRKKSRKE. Lys-6 and Lys-13 each carry N6-acetyllysine. Over residues 13-34 the composition is skewed to basic residues; it reads KGSKKAVTKTQKKGDKKRKKSR. Ser-15 carries the post-translational modification Phosphoserine. 2 positions are modified to N6-acetyllysine: Lys-16 and Lys-21. Residue Lys-121 forms a Glycyl lysine isopeptide (Lys-Gly) (interchain with G-Cter in ubiquitin) linkage.

The protein belongs to the histone H2B family. The nucleosome is a histone octamer containing two molecules each of H2A, H2B, H3 and H4 assembled in one H3-H4 heterotetramer and two H2A-H2B heterodimers. The octamer wraps approximately 147 bp of DNA. In terms of processing, monoubiquitination of Lys-121 by the RNF20/40 complex gives a specific tag for epigenetic transcriptional activation and is also prerequisite for histone H3 'Lys-4' and 'Lys-79' methylation. Phosphorylated on Ser-15 during apoptosis; which facilitates apoptotic chromatin condensation.

It localises to the nucleus. Its subcellular location is the chromosome. Its function is as follows. Core component of nucleosome. Nucleosomes wrap and compact DNA into chromatin, limiting DNA accessibility to the cellular machineries which require DNA as a template. Histones thereby play a central role in transcription regulation, DNA repair, DNA replication and chromosomal stability. DNA accessibility is regulated via a complex set of post-translational modifications of histones, also called histone code, and nucleosome remodeling. This Cairina moschata (Muscovy duck) protein is Histone H2B.